The chain runs to 482 residues: tRNA sulfurtransferase (482 aa).

Positions 61 to 165 constitute a THUMP domain; that stretch reads LAIRDALTRI…DDRLLLIKGR (105 aa). ATP contacts are provided by residues 183–184, lysine 265, glycine 287, and glutamine 296; that span reads LI. Cysteine 344 and cysteine 456 are oxidised to a cystine. In terms of domain architecture, Rhodanese spans 404-482; that stretch reads FGPNDVILDI…GFANVKVYRP (79 aa). Cysteine 456 serves as the catalytic Cysteine persulfide intermediate.

The protein belongs to the ThiI family.

The protein resides in the cytoplasm. It catalyses the reaction [ThiI sulfur-carrier protein]-S-sulfanyl-L-cysteine + a uridine in tRNA + 2 reduced [2Fe-2S]-[ferredoxin] + ATP + H(+) = [ThiI sulfur-carrier protein]-L-cysteine + a 4-thiouridine in tRNA + 2 oxidized [2Fe-2S]-[ferredoxin] + AMP + diphosphate. The catalysed reaction is [ThiS sulfur-carrier protein]-C-terminal Gly-Gly-AMP + S-sulfanyl-L-cysteinyl-[cysteine desulfurase] + AH2 = [ThiS sulfur-carrier protein]-C-terminal-Gly-aminoethanethioate + L-cysteinyl-[cysteine desulfurase] + A + AMP + 2 H(+). It functions in the pathway cofactor biosynthesis; thiamine diphosphate biosynthesis. Catalyzes the ATP-dependent transfer of a sulfur to tRNA to produce 4-thiouridine in position 8 of tRNAs, which functions as a near-UV photosensor. Also catalyzes the transfer of sulfur to the sulfur carrier protein ThiS, forming ThiS-thiocarboxylate. This is a step in the synthesis of thiazole, in the thiamine biosynthesis pathway. The sulfur is donated as persulfide by IscS. This is tRNA sulfurtransferase from Salmonella choleraesuis (strain SC-B67).